Here is a 144-residue protein sequence, read N- to C-terminus: Peptide methionine sulfoxide reductase B7 (144 aa).

The MsrB domain occupies 19–140; it reads DEEWRAVLSP…NSVSLKFSSA (122 aa). Zn(2+) is bound by residues cysteine 58, cysteine 61, cysteine 104, and cysteine 107. Cysteine 76 and cysteine 129 are disulfide-bonded. The Nucleophile role is filled by cysteine 129.

The protein belongs to the MsrB Met sulfoxide reductase family. Requires Zn(2+) as cofactor.

It localises to the cytoplasm. Its subcellular location is the cytosol. It catalyses the reaction L-methionyl-[protein] + [thioredoxin]-disulfide + H2O = L-methionyl-(R)-S-oxide-[protein] + [thioredoxin]-dithiol. Catalyzes the reduction of methionine sulfoxide (MetSO) to methionine in proteins. Plays a protective role against oxidative stress by restoring activity to proteins that have been inactivated by methionine oxidation. MSRB family specifically reduces the MetSO R-enantiomer. The chain is Peptide methionine sulfoxide reductase B7 (MSRB7) from Arabidopsis thaliana (Mouse-ear cress).